The following is a 504-amino-acid chain: Catalase (504 aa).

An N-terminal signal peptide occupies residues 1–21 (MQMSKSFLLITVGLASTSLQA). Catalysis depends on residues H72 and N145. Y353 serves as a coordination point for heme.

The protein belongs to the catalase family. Heme serves as cofactor.

It localises to the periplasm. It carries out the reaction 2 H2O2 = O2 + 2 H2O. Functionally, decomposes hydrogen peroxide into water and oxygen; serves to protect cells from the toxic effects of hydrogen peroxide. This chain is Catalase, found in Vibrio parahaemolyticus serotype O3:K6 (strain RIMD 2210633).